The sequence spans 785 residues: MRLSLWGSLLFFSFFVKHLTSLDPNTDAYHLSSFFSAMRLPNSPQAHTFSSLCSWPGVVVCDSSENVLHISASGLDLSGSIPDNTIGKMSKLQTLDLSGNKITSLPSDLWSLSLLESLNLSSNRISEPLPSNIGNFMSLHTLDLSFNSISGKIPAAISNLVNLTTLKLHNNDFQFGVPPELVHCRSLLSIDLSSNRLNESLPVGFGSAFPLLKSLNLSRNLFQGSLIGVLHENVETVDLSENRFDGHILQLIPGHKHNWSSLIHLDLSDNSFVGHIFNGLSSAHKLGHLNLACNRFRAQEFPEIGKLSALHYLNLSRTNLTNIIPREISRLSHLKVLDLSSNNLTGHVPMLSVKNIEVLDLSLNKLDGDIPRPLLEKLAMMQRFNFSFNNLTFCNPNFSQETIQRSFINIRNNCPFAAKPIITKGKKVNKKNTGLKIGLGLAISMAFLLIGLLLILVALRVRRKSRTWATKLAINNTEPNSPDQHDSTTDIKQATQIPVVMIDKPLMKMTLADLKAATFNFDRGTMLWEGKSGPTYGAVLPGGFRAALKVIPSGTTLTDTEVSIAFERLARINHPNLFPLCGYCIATEQRIAIYEDLDMVNLQSLLHNNGDDSAPWRLRHKIALGTARALAFLHHGCIPPMVHGEVKAATILLDSSQEPRLADFGLVKLLDEQFPGSESLDGYTPPEQERNASPTLESDVYSFGVVLLELVSGKKPEGDLVNWVRGLVRQGQGLRAIDPTMQETVPEDEIAEAVKIGYLCTADLPWKRPTMQQVVGLLKDISPNY.

The first 21 residues, 1–21, serve as a signal peptide directing secretion; that stretch reads MRLSLWGSLLFFSFFVKHLTS. Over 22–436 the chain is Extracellular; it reads LDPNTDAYHL…KVNKKNTGLK (415 aa). LRR repeat units follow at residues 64 to 88, 89 to 112, 114 to 136, 138 to 160, 161 to 184, 186 to 208, 210 to 232, 236 to 258, 259 to 283, 284 to 306, 307 to 330, 331 to 355, 357 to 377, and 379 to 405; these read SENVLHISASGLDLSGSIPDNTIGK, MSKLQTLDLSGNKITSLPSDLWSL, LLESLNLSSNRISEPLPSNIGNF, SLHTLDLSFNSISGKIPAAISNL, VNLTTLKLHNNDFQFGVPPELVHC, SLLSIDLSSNRLNESLPVGFGSA, PLLKSLNLSRNLFQGSLIGVLHE, TVDLSENRFDGHILQLIPGHKHN, WSSLIHLDLSDNSFVGHIFNGLSSA, HKLGHLNLACNRFRAQEFPEIGK, LSALHYLNLSRTNLTNIIPREISR, LSHLKVLDLSSNNLTGHVPMLSVKN, EVLDLSLNKLDGDIPRPLLEK, and AMMQRFNFSFNNLTFCNPNFSQETIQR. N-linked (GlcNAc...) asparagine glycosylation occurs at asparagine 119. 4 N-linked (GlcNAc...) asparagine glycosylation sites follow: asparagine 162, asparagine 198, asparagine 216, and asparagine 258. N-linked (GlcNAc...) asparagine glycosylation is found at asparagine 314, asparagine 319, and asparagine 343. N-linked (GlcNAc...) asparagine glycans are attached at residues asparagine 385, asparagine 390, and asparagine 397. A helical transmembrane segment spans residues 437-457; sequence IGLGLAISMAFLLIGLLLILV. Residues 458–785 lie on the Cytoplasmic side of the membrane; sequence ALRVRRKSRT…GLLKDISPNY (328 aa). Phosphothreonine is present on residues threonine 510 and threonine 518. In terms of domain architecture, Protein kinase spans 521–785; the sequence is FDRGTMLWEG…GLLKDISPNY (265 aa). Residues 527-535 and lysine 549 each bind ATP; that span reads LWEGKSGPT. A phosphotyrosine mark is found at tyrosine 594 and tyrosine 683.

This sequence belongs to the protein kinase superfamily. Ser/Thr protein kinase family.

The protein resides in the cell membrane. This Arabidopsis thaliana (Mouse-ear cress) protein is Probably inactive leucine-rich repeat receptor-like protein kinase At5g58150.